The sequence spans 509 residues: MAVKAPWLGFLLLVSLWGLSTPALLLRRLREHIQKFQESSSLHPGFGLGHGPGAVPKQGWLEQPLDPFNASDRRTFLQRYWVNDQHRTGQDVPVFLHIGGEGSLGPGSVMAGHPAALAPAWGALVISLEHRFYGLSMPAGGLDLALLRYLSSRHALADVASARQALSGLLNVSSSSPWICFGGSYAGSLATWARLKFPHLVFAAVASSAPLSAVVDFSAYNQVVARSLTQVAIGGSLECLAAASTAFTEVERLLRAGPAAQAVLREELGACGSLDLTEDQAELLGALQALVGGTVQYDGQAGAPLSVRQLCGLLLGKWGNRSRSTPYLGLRRAVQIVLRSMGQKCLSFSRAETVAQLSNTEPQVSGVGDRQWLYQTCTEFGFYVTCEGLQCPFSQLPALPFQLELCEQVFGLSPASVAQAVAQTNSYYGGQSPGATQVLFVNGDTDPWHVLSVTQDLGLSEPALLIPSASHCFDMAPMRPSDSPSLRLGRQKISQQLQDWLKDIKKSQS.

The first 22 residues, 1–22 (MAVKAPWLGFLLLVSLWGLSTP), serve as a signal peptide directing secretion. 2 N-linked (GlcNAc...) asparagine glycosylation sites follow: asparagine 69 and asparagine 171. The Charge relay system role is filled by serine 184. Asparagine 320 is a glycosylation site (N-linked (GlcNAc...) asparagine). Catalysis depends on charge relay system residues aspartate 446 and histidine 471.

Belongs to the peptidase S28 family. Expressed predominantly in cortical thymic epithelial cells, with highest expression around vessels and the thymic capsule.

Its subcellular location is the cytoplasmic vesicle. Its function is as follows. Protease that may play a role in T-cell development. The polypeptide is Thymus-specific serine protease (Prss16) (Mus musculus (Mouse)).